The sequence spans 376 residues: Mitogen-activated protein kinase 5 (376 aa).

The Protein kinase domain maps to 43 to 329; sequence VPPIRPIGRG…VEEALCYPYL (287 aa). ATP contacts are provided by residues 49-57 and K72; that span reads IGRGAYGFV. D169 functions as the Proton acceptor in the catalytic mechanism. Phosphothreonine is present on T201. The TXY motif lies at 201–203; sequence TEY. Phosphotyrosine is present on Y203. A Phosphothreonine modification is found at T206.

The protein belongs to the protein kinase superfamily. CMGC Ser/Thr protein kinase family. MAP kinase subfamily. Post-translationally, autophosphorylated on threonine and tyrosine residues. Dually phosphorylated on Thr-201 and Tyr-203, which activates the enzyme.

It carries out the reaction L-seryl-[protein] + ATP = O-phospho-L-seryl-[protein] + ADP + H(+). The catalysed reaction is L-threonyl-[protein] + ATP = O-phospho-L-threonyl-[protein] + ADP + H(+). Its activity is regulated as follows. Activated by threonine and tyrosine phosphorylation. Activated by the MAP kinase kinase MKK2. Activated by the MAP kinase kinase MKK6 in vitro. The sequence is that of Mitogen-activated protein kinase 5 (MPK5) from Arabidopsis thaliana (Mouse-ear cress).